Here is a 128-residue protein sequence, read N- to C-terminus: Ribonuclease pancreatic (128 aa).

Residues 1 to 15 (SESSAKKFERQHMDS) are compositionally biased toward basic and acidic residues. The disordered stretch occupies residues 1–28 (SESSAKKFERQHMDSRGSPSTNPNYCNE). Substrate contacts are provided by K7 and R10. The Proton acceptor role is filled by H12. Intrachain disulfides connect C26/C84, C40/C95, C58/C110, and C65/C72. An N-linked (GlcNAc...) asparagine glycan is attached at N34. Substrate contacts are provided by residues 41–45 (KPVNT), K66, and R85. The active-site Proton donor is H119.

Belongs to the pancreatic ribonuclease family. In terms of assembly, monomer. Interacts with and forms tight 1:1 complexes with RNH1. Dimerization of two such complexes may occur. Interaction with RNH1 inhibits this protein. In terms of tissue distribution, pancreas.

It localises to the secreted. The enzyme catalyses an [RNA] containing cytidine + H2O = an [RNA]-3'-cytidine-3'-phosphate + a 5'-hydroxy-ribonucleotide-3'-[RNA].. The catalysed reaction is an [RNA] containing uridine + H2O = an [RNA]-3'-uridine-3'-phosphate + a 5'-hydroxy-ribonucleotide-3'-[RNA].. Its function is as follows. Endonuclease that catalyzes the cleavage of RNA on the 3' side of pyrimidine nucleotides. Acts on single-stranded and double-stranded RNA. The sequence is that of Ribonuclease pancreatic (RNASE1) from Myocastor coypus (Coypu).